The following is a 362-amino-acid chain: 3-isopropylmalate dehydrogenase (362 aa).

Residue 76 to 87 (GPKWGTGSVRPE) participates in NAD(+) binding. Arg94, Arg104, Arg133, and Asp222 together coordinate substrate. Mg(2+)-binding residues include Asp222, Asp247, and Asp251. 286–297 (GSAPDLGPGKVN) contributes to the NAD(+) binding site.

The protein belongs to the isocitrate and isopropylmalate dehydrogenases family. As to quaternary structure, homodimer. Mg(2+) serves as cofactor. It depends on Mn(2+) as a cofactor.

The protein localises to the cytoplasm. It carries out the reaction (2R,3S)-3-isopropylmalate + NAD(+) = 4-methyl-2-oxopentanoate + CO2 + NADH. It functions in the pathway amino-acid biosynthesis; L-leucine biosynthesis; L-leucine from 3-methyl-2-oxobutanoate: step 3/4. Its function is as follows. Catalyzes the oxidation of 3-carboxy-2-hydroxy-4-methylpentanoate (3-isopropylmalate) to 3-carboxy-4-methyl-2-oxopentanoate. The product decarboxylates to 4-methyl-2 oxopentanoate. This chain is 3-isopropylmalate dehydrogenase (LEU2), found in Pichia angusta (Yeast).